The primary structure comprises 432 residues: CinA-like protein (432 aa).

This sequence belongs to the CinA family.

This is CinA-like protein from Colwellia psychrerythraea (strain 34H / ATCC BAA-681) (Vibrio psychroerythus).